A 175-amino-acid chain; its full sequence is MALRLDDKKAVVAEVAAVAARAHSAVAAEYRGLSVSALTQLRKEARESGVYLRVVKNTLARKAVEGTGFECMQDGLVGPLILAFSLEDPGSAARVVSAFAKTNDKLVVKLVAVGGKQYGPSELERLASLPNREQAISMLMGTMKAPIEKFVRTLAEPHAKFVRTLAAVRDQKQAA.

The protein belongs to the universal ribosomal protein uL10 family. In terms of assembly, part of the ribosomal stalk of the 50S ribosomal subunit. The N-terminus interacts with L11 and the large rRNA to form the base of the stalk. The C-terminus forms an elongated spine to which L12 dimers bind in a sequential fashion forming a multimeric L10(L12)X complex.

Its function is as follows. Forms part of the ribosomal stalk, playing a central role in the interaction of the ribosome with GTP-bound translation factors. The chain is Large ribosomal subunit protein uL10 from Methylococcus capsulatus (strain ATCC 33009 / NCIMB 11132 / Bath).